The following is a 461-amino-acid chain: tRNA-2-methylthio-N(6)-dimethylallyladenosine synthase (461 aa).

The region spanning 25–143 is the MTTase N-terminal domain; it reads PTYSIITHGC…LPYLIDRHLS (119 aa). The [4Fe-4S] cluster site is built by cysteine 34, cysteine 70, cysteine 104, cysteine 179, cysteine 183, and cysteine 186. In terms of domain architecture, Radical SAM core spans 165–395; it reads RDNEYVGYVN…LDVAYPIFYE (231 aa). The region spanning 398–461 is the TRAM domain; sequence KSYLGTIQEV…SFALTGEMVD (64 aa).

The protein belongs to the methylthiotransferase family. MiaB subfamily. Monomer. The cofactor is [4Fe-4S] cluster.

The protein localises to the cytoplasm. The catalysed reaction is N(6)-dimethylallyladenosine(37) in tRNA + (sulfur carrier)-SH + AH2 + 2 S-adenosyl-L-methionine = 2-methylsulfanyl-N(6)-dimethylallyladenosine(37) in tRNA + (sulfur carrier)-H + 5'-deoxyadenosine + L-methionine + A + S-adenosyl-L-homocysteine + 2 H(+). In terms of biological role, catalyzes the methylthiolation of N6-(dimethylallyl)adenosine (i(6)A), leading to the formation of 2-methylthio-N6-(dimethylallyl)adenosine (ms(2)i(6)A) at position 37 in tRNAs that read codons beginning with uridine. The chain is tRNA-2-methylthio-N(6)-dimethylallyladenosine synthase from Finegoldia magna (strain ATCC 29328 / DSM 20472 / WAL 2508) (Peptostreptococcus magnus).